A 534-amino-acid polypeptide reads, in one-letter code: SWI/SNF complex component SNF12 homolog (534 aa).

Residues 1-12 are compositionally biased toward polar residues; the sequence is MSGNNNNPQKPQ. Disordered stretches follow at residues 1-33 and 78-132; these read MSGN…PGNQ and MTMN…SPMR. Over residues 94–105 the composition is skewed to low complexity; sequence PSSPSLTTPGSL. In terms of domain architecture, SWIB/MDM2 spans 314–391; sequence YVPEKFKLST…SQKISHHLSP (78 aa).

Belongs to the SMARCD family. As to quaternary structure, part of a SWI-SNF complex.

The protein localises to the nucleus. Functionally, involved in transcriptional activation and repression of select genes by chromatin remodeling (alteration of DNA-nucleosome topology). The protein is SWI/SNF complex component SNF12 homolog of Arabidopsis thaliana (Mouse-ear cress).